We begin with the raw amino-acid sequence, 87 residues long: Pyocin-S2 immunity protein (87 aa).

It belongs to the colicins ColE2/ColE8/ColE9 and pyocins S1/S2 family.

The protein is Pyocin-S2 immunity protein (imm2) of Pseudomonas aeruginosa (strain ATCC 15692 / DSM 22644 / CIP 104116 / JCM 14847 / LMG 12228 / 1C / PRS 101 / PAO1).